Consider the following 289-residue polypeptide: Complement C1q tumor necrosis factor-related protein 7 (289 aa).

The first 16 residues, 1-16 (MIVLLYVTSLAICASG), serve as a signal peptide directing secretion. Residues 36–134 (IPGLPGPPGP…GDRGDQGDPG (99 aa)) are disordered. The Collagen-like domain occupies 38-139 (GLPGPPGPPG…QGDPGLPGVC (102 aa)). Low complexity predominate over residues 48–61 (ANGSPGPHGRIGLP). Positions 63–76 (RDGRDGRKGEKGEK) are enriched in basic and acidic residues. The segment covering 78 to 91 (TAGLKGKTGPLGLA) has biased composition (low complexity). Positions 93–102 (EKGDQGETGK) are enriched in basic and acidic residues. Residues 143–279 (SIVLKSAFSV…GFLLYVDTDY (137 aa)) form the C1q domain.

It is found in the secreted. The sequence is that of Complement C1q tumor necrosis factor-related protein 7 (C1qtnf7) from Mus musculus (Mouse).